The following is a 160-amino-acid chain: MRCPNCNSLDTQVKDSRPTEDSSVIRRRRVCIACNFRFTTFERVQLRELTVIKRNGRRVPFDRDKLVRSLQISLRKRPVEPERVEQMVSAIVRELESGGEADISSETIGEIVMDHLRKLDDVAYVRFASVYRNFREAKDFEAVLGELSGEEEARPALVRK.

Positions 1–11 are enriched in polar residues; sequence MRCPNCNSLDT. Residues 1 to 20 form a disordered region; the sequence is MRCPNCNSLDTQVKDSRPTE. The segment at 3 to 34 is a zinc-finger region; the sequence is CPNCNSLDTQVKDSRPTEDSSVIRRRRVCIAC. Residues 49 to 139 enclose the ATP-cone domain; the sequence is LTVIKRNGRR…VYRNFREAKD (91 aa).

The protein belongs to the NrdR family. The cofactor is Zn(2+).

In terms of biological role, negatively regulates transcription of bacterial ribonucleotide reductase nrd genes and operons by binding to NrdR-boxes. This chain is Transcriptional repressor NrdR, found in Rhodopseudomonas palustris (strain HaA2).